The chain runs to 424 residues: MAKQIQAIRGMNDILPTQSPLWQKLETVLRDTVGSYGYSEIRTPIVESTDLFKRSIGEVTDIVEKEMYTFEDRNGDSLTLRPEGTASTVRAGNEHGLLYNQEQRLWYMGPMFRHERPQKGRYRQFHQFGVEVYGIPTADIDAEVLMLSAKLWEKLGITEHVTLELNTLGDTEERAAYRDALIAFLEQHKEVLDEDSQRRMYSNPLRVLDSKNADVQALLADAPVLMDYFGEDTRSHFSHLCELLEAVGIQYTINPRLVRGLDYYNRTVFEWVTSSLGSQGTVLAGGRYDGLVGQLGGKPTPAVGFAMGLERIVLLLQTLELDKDIGPAVDVYVTAMGDNCKVEAIKIAQELRASLPTAKVMSHCGGGNFKKQMKRADKSGACVALVIGEDELANNQVAVKHLREDKAQELVARDALATYIAELI.

It belongs to the class-II aminoacyl-tRNA synthetase family. As to quaternary structure, homodimer.

Its subcellular location is the cytoplasm. The catalysed reaction is tRNA(His) + L-histidine + ATP = L-histidyl-tRNA(His) + AMP + diphosphate + H(+). The polypeptide is Histidine--tRNA ligase (Shewanella pealeana (strain ATCC 700345 / ANG-SQ1)).